Here is a 244-residue protein sequence, read N- to C-terminus: Ribonuclease PH (244 aa).

Phosphate-binding positions include Arg-90 and 128-130; that span reads GTR.

This sequence belongs to the RNase PH family. Homohexameric ring arranged as a trimer of dimers.

The enzyme catalyses tRNA(n+1) + phosphate = tRNA(n) + a ribonucleoside 5'-diphosphate. In terms of biological role, phosphorolytic 3'-5' exoribonuclease that plays an important role in tRNA 3'-end maturation. Removes nucleotide residues following the 3'-CCA terminus of tRNAs; can also add nucleotides to the ends of RNA molecules by using nucleoside diphosphates as substrates, but this may not be physiologically important. Probably plays a role in initiation of 16S rRNA degradation (leading to ribosome degradation) during starvation. The chain is Ribonuclease PH from Cutibacterium acnes (strain DSM 16379 / KPA171202) (Propionibacterium acnes).